The sequence spans 699 residues: Polyribonucleotide nucleotidyltransferase (699 aa).

Mg(2+) is bound by residues Asp485 and Asp491. The region spanning 552-611 (PRITTIKINPEKIRDVIGKGGAVIRALTEETGTTIELEDDGTVKIASSNGEATKEAIRRI) is the KH domain. In terms of domain architecture, S1 motif spans 621–689 (GRIYNGKVIR…RQGRVRLSIK (69 aa)).

It belongs to the polyribonucleotide nucleotidyltransferase family. Component of the RNA degradosome, which is a multiprotein complex involved in RNA processing and mRNA degradation. Requires Mg(2+) as cofactor.

It is found in the cytoplasm. It carries out the reaction RNA(n+1) + phosphate = RNA(n) + a ribonucleoside 5'-diphosphate. Functionally, involved in mRNA degradation. Catalyzes the phosphorolysis of single-stranded polyribonucleotides processively in the 3'- to 5'-direction. In Shewanella oneidensis (strain ATCC 700550 / JCM 31522 / CIP 106686 / LMG 19005 / NCIMB 14063 / MR-1), this protein is Polyribonucleotide nucleotidyltransferase.